The chain runs to 325 residues: Holliday junction branch migration complex subunit RuvB (325 aa).

Positions 1–172 (MENNELLDIT…FGVVFRLEFY (172 aa)) are large ATPase domain (RuvB-L). Residues Leu11, Arg12, Gly53, Lys56, Thr57, Thr58, 119 to 121 (EDF), Arg162, Tyr172, and Arg209 each bind ATP. Thr57 is a Mg(2+) binding site. A small ATPAse domain (RuvB-S) region spans residues 173-243 (NSEELKEIVK…IAQEALIAMD (71 aa)). Residues 246 to 325 (DYGLDDMDRK…LKRKIPERLF (80 aa)) form a head domain (RuvB-H) region. Residues Arg301 and Arg306 each coordinate DNA.

It belongs to the RuvB family. As to quaternary structure, homohexamer. Forms an RuvA(8)-RuvB(12)-Holliday junction (HJ) complex. HJ DNA is sandwiched between 2 RuvA tetramers; dsDNA enters through RuvA and exits via RuvB. An RuvB hexamer assembles on each DNA strand where it exits the tetramer. Each RuvB hexamer is contacted by two RuvA subunits (via domain III) on 2 adjacent RuvB subunits; this complex drives branch migration. In the full resolvosome a probable DNA-RuvA(4)-RuvB(12)-RuvC(2) complex forms which resolves the HJ.

It localises to the cytoplasm. The catalysed reaction is ATP + H2O = ADP + phosphate + H(+). Its function is as follows. The RuvA-RuvB-RuvC complex processes Holliday junction (HJ) DNA during genetic recombination and DNA repair, while the RuvA-RuvB complex plays an important role in the rescue of blocked DNA replication forks via replication fork reversal (RFR). RuvA specifically binds to HJ cruciform DNA, conferring on it an open structure. The RuvB hexamer acts as an ATP-dependent pump, pulling dsDNA into and through the RuvAB complex. RuvB forms 2 homohexamers on either side of HJ DNA bound by 1 or 2 RuvA tetramers; 4 subunits per hexamer contact DNA at a time. Coordinated motions by a converter formed by DNA-disengaged RuvB subunits stimulates ATP hydrolysis and nucleotide exchange. Immobilization of the converter enables RuvB to convert the ATP-contained energy into a lever motion, pulling 2 nucleotides of DNA out of the RuvA tetramer per ATP hydrolyzed, thus driving DNA branch migration. The RuvB motors rotate together with the DNA substrate, which together with the progressing nucleotide cycle form the mechanistic basis for DNA recombination by continuous HJ branch migration. Branch migration allows RuvC to scan DNA until it finds its consensus sequence, where it cleaves and resolves cruciform DNA. This chain is Holliday junction branch migration complex subunit RuvB, found in Thermodesulfovibrio yellowstonii (strain ATCC 51303 / DSM 11347 / YP87).